The chain runs to 383 residues: Histidine decarboxylase (383 aa).

Position 120 (His120) interacts with substrate. At Lys233 the chain carries N6-(pyridoxal phosphate)lysine.

It belongs to the group II decarboxylase family. In terms of assembly, homotetramer. It depends on pyridoxal 5'-phosphate as a cofactor.

It carries out the reaction L-histidine + H(+) = histamine + CO2. In Acinetobacter baumannii (strain ACICU), this protein is Histidine decarboxylase.